The primary structure comprises 219 residues: Cyclin-U4-3 (219 aa).

Belongs to the cyclin family. Cyclin U/P subfamily. In terms of assembly, interacts with CDKA-1. Expressed at low levels in roots, stems and flowers. Expressed in the shoot apex, leaf primordia and young leaves.

The polypeptide is Cyclin-U4-3 (CYCU4-3) (Arabidopsis thaliana (Mouse-ear cress)).